Consider the following 190-residue polypeptide: UPF0301 protein Psyr_0485 (190 aa).

It belongs to the UPF0301 (AlgH) family.

The polypeptide is UPF0301 protein Psyr_0485 (Pseudomonas syringae pv. syringae (strain B728a)).